Here is a 617-residue protein sequence, read N- to C-terminus: ATP-dependent rRNA helicase SPB4 (617 aa).

A Q motif motif is present at residues 10-38 (WKNLQYDLQPWIKEAIASLGFPTMTPVQA). A Helicase ATP-binding domain is found at 41–233 (IPLLSGNKDV…RAGMNNPVKV (193 aa)). 54-61 (AVTGSGKT) provides a ligand contact to ATP. The short motif at 181 to 184 (DEAD) is the DEAD box element. The region spanning 261 to 421 (KITTLIKLLH…EMPTPDLNQS (161 aa)) is the Helicase C-terminal domain. Residues 515–585 (ADNQQEASRL…EKQIMEESSD (71 aa)) adopt a coiled-coil conformation. The segment at 547–617 (KNEAWSSKTE…GSMQGSFDDL (71 aa)) is disordered. Over residues 555-566 (TETKETKQERRE) the composition is skewed to basic and acidic residues. Over residues 608-617 (GSMQGSFDDL) the composition is skewed to polar residues.

This sequence belongs to the DEAD box helicase family. DDX55/SPB4 subfamily. As to quaternary structure, component of pre-60S ribosomal complexes.

Its subcellular location is the nucleus. It is found in the nucleolus. It carries out the reaction ATP + H2O = ADP + phosphate + H(+). Its function is as follows. ATP-binding RNA helicase involved in the biogenesis of 60S ribosomal subunits. Binds 90S pre-ribosomal particles and dissociates from pre-60S ribosomal particles after processing of 27SB pre-rRNA. Required for the normal formation of 18S rRNA through the processing of pre-rRNAs at sites A0, A1 and A2, and the normal formation of 25S and 5.8S rRNAs through the processing of pre-rRNAs at sites C1 and C2. The protein is ATP-dependent rRNA helicase SPB4 of Scheffersomyces stipitis (strain ATCC 58785 / CBS 6054 / NBRC 10063 / NRRL Y-11545) (Yeast).